The primary structure comprises 62 residues: Photosystem II reaction center protein Z (62 aa).

2 helical membrane-spanning segments follow: residues 8–28 (LVSILILLSFALVVGVPVILV) and 41–61 (YASAGLWFGLVIVTAAFNSFV).

Belongs to the PsbZ family. As to quaternary structure, PSII is composed of 1 copy each of membrane proteins PsbA, PsbB, PsbC, PsbD, PsbE, PsbF, PsbH, PsbI, PsbJ, PsbK, PsbL, PsbM, PsbT, PsbX, PsbY, PsbZ, Psb30/Ycf12, at least 3 peripheral proteins of the oxygen-evolving complex and a large number of cofactors. It forms dimeric complexes.

The protein resides in the plastid. Its subcellular location is the chloroplast thylakoid membrane. Functionally, may control the interaction of photosystem II (PSII) cores with the light-harvesting antenna, regulates electron flow through the 2 photosystem reaction centers. PSII is a light-driven water plastoquinone oxidoreductase, using light energy to abstract electrons from H(2)O, generating a proton gradient subsequently used for ATP formation. This Guillardia theta (Cryptophyte) protein is Photosystem II reaction center protein Z.